Consider the following 827-residue polypeptide: Histone acetyltransferase MOF (827 aa).

Disordered regions lie at residues 1–190 (MSEA…SDTV), 237–276 (QLGL…AVYL), 288–309 (STPG…MPPP), and 324–360 (EAIS…TSRE). The span at 19 to 30 (PIEEEHEPEQEP) shows a compositional bias: acidic residues. The segment covering 55–69 (LDVSGSDQSAEQSLD) has biased composition (polar residues). A compositionally biased stretch (low complexity) spans 103–116 (SSTSTSSTRSSSSS). Residues 121–133 (VSEAEEAPPEPEP) are compositionally biased toward acidic residues. The segment covering 141–150 (QEEKKEDGQD) has biased composition (basic and acidic residues). Acidic residues predominate over residues 176-186 (DQEIETEDEPS). The segment covering 243–253 (AAPPPPPPPPA) has biased composition (pro residues). Residues 326-350 (ISDDSSETSSSDDDEEEEEDEDDAL) are compositionally biased toward acidic residues. Lysine 372 is covalently cross-linked (Glycyl lysine isopeptide (Lys-Gly) (interchain with G-Cter in ubiquitin)). One can recognise a Tudor-knot domain in the interval 382–433 (IYFIRREDGTVHRGQVLQSRTTENAAAPDEYYVHYVGLNRRLDGWVGRHRIS). Residues lysine 483, lysine 532, and lysine 539 each participate in a glycyl lysine isopeptide (Lys-Gly) (interchain with G-Cter in ubiquitin) cross-link. Residues 538–813 (TKIKYIDKLQ…IDTDYLVWSP (276 aa)) enclose the MYST-type HAT domain. The C2HC MYST-type zinc finger occupies 571 to 596 (LYVCEYCLKYMRFRSSYAYHLHECDR). Positions 574, 577, 590, and 594 each coordinate Zn(2+). At lysine 638 the chain carries N6-acetyllysine; by autocatalysis. Acetyl-CoA is bound by residues isoleucine 681, arginine 689, lysine 690, glycine 691, glycine 693, and lysine 694. Catalysis depends on glutamate 714, which acts as the Proton donor/acceptor. Residue lysine 715 forms a Glycyl lysine isopeptide (Lys-Gly) (interchain with G-Cter in ubiquitin) linkage. 2 residues coordinate acetyl-CoA: serine 718 and serine 727. Lysine 749 is covalently cross-linked (Glycyl lysine isopeptide (Lys-Gly) (interchain with G-Cter in ubiquitin)). Tyrosine 774 lines the acetyl-CoA pocket. Residues lysine 776, lysine 798, and lysine 801 each participate in a glycyl lysine isopeptide (Lys-Gly) (interchain with G-Cter in ubiquitin) cross-link. Lysine 798 provides a ligand contact to acetyl-CoA.

It belongs to the MYST (SAS/MOZ) family. As to quaternary structure, component of the male-specific lethal (MSL) histone acetyltransferase complex, composed of mof, mle, msl-1, msl-2 and msl-3 proteins, as well as roX1 and roX2 non-coding RNAs. Component of a maternal MSL subcomplex composed of mof, msl-1 and msl-3. Component of the non-specific lethal (NLS) histone acetyltransferase complex at least composed of mof, nls1, dgt1/NSL2, Rcd1/NSL3, Rcd5/MCRS2, MBD-R2 and wds. In males, interacts with nucleoporin Mgtor. Autoacetylation at Lys-638 is required for binding histone H4 with high affinity and for proper function. In terms of processing, ubiquitinated by msl-2.

It localises to the nucleus. The protein localises to the chromosome. It catalyses the reaction L-lysyl-[histone] + acetyl-CoA = N(6)-acetyl-L-lysyl-[histone] + CoA + H(+). Functionally, histone acetyltransferase that catalyzes the formation of the majority of histone H4 acetylation at 'Lys-16' (H4K16ac), an epigenetic mark that prevents chromatin compaction and constitutes the only acetylation mark intergenerationally transmitted. Catalytic component of the male-specific lethal (MSL) complex, a multiprotein complex essential for elevating transcription of the single X chromosome in the male (X chromosome dosage compensation). The MSL complex specifically associates with the single X chromosome in males and mediates formation of H4K16ac, promoting a two-fold activation of X chromosome. Dosage compensation ensures that males with a single X chromosome have the same amount of most X-linked gene products as females with two X chromosomes. In oocytes, mof is also part of a maternal MSL subcomplex that mediates H4K16ac deposition for intergenerational transmission: H4K16ac prepares the chromatin landscape for establishment of nucleosome accessibility and poises genes for future activation. H4K16ac constitutes the only acetylation mark maintained from oocytes to fertilized embryos. Mof also constitutes the catalytic component of the non-specific lethal (NLS) complex, which promotes expression of housekeeping genes on X chromosome and autosomes. The NSL complex promotes strong expression of housekeeping genes compared to the two-fold expression mediated by the MSL complex on X chromosome, suggesting that the activation potential of mof is constrained in the context of dosage compensation. The protein is Histone acetyltransferase MOF of Drosophila melanogaster (Fruit fly).